The chain runs to 497 residues: Inactive metallocarboxypeptidase ecm14 (497 aa).

The signal sequence occupies residues 1-28 (MAYNKSLKSLVFILLASQIVFVLFLCYG). The propeptide occupies 29–148 (KSSRELGVKW…TLFESIVPDT (120 aa)). The 311-residue stretch at 182-492 (SYQNLESINS…AMILYYGEFI (311 aa)) folds into the Peptidase M14 domain. Residues histidine 248 and glutamate 251 each contribute to the Zn(2+) site. Substrate is bound by residues 248–251 (HARE) and 323–324 (DA). The cysteines at positions 317 and 337 are disulfide-linked. Histidine 377 is a Zn(2+) binding site. 378–379 (SY) contributes to the substrate binding site.

It belongs to the peptidase M14 family. Zn(2+) is required as a cofactor.

The protein localises to the endoplasmic reticulum. Its subcellular location is the secreted. Its function is as follows. Inactive carboxypeptidase that may play a role in cell wall organization and biogenesis. This Schizosaccharomyces pombe (strain 972 / ATCC 24843) (Fission yeast) protein is Inactive metallocarboxypeptidase ecm14.